We begin with the raw amino-acid sequence, 475 residues long: Mitochondrial adenyl nucleotide antiporter SLC25A24 (475 aa).

The segment at 1-173 (MLRWLRGFVL…RFWKHSTGID (173 aa)) is regulatory N-terminal domain. Residues 1–197 (MLRWLRGFVL…ERKSGQWWRQ (197 aa)) lie on the Mitochondrial intermembrane side of the membrane. EF-hand domains follow at residues 19–54 (EPPT…LGIP), 55–88 (LGQD…KDHE), 86–121 (DHEK…LGLT), and 122–157 (ISEQ…NPVA). Residues aspartate 32, asparagine 34, aspartate 36, valine 38, glutamate 43, aspartate 68, asparagine 70, aspartate 72, lysine 74, glutamate 79, aspartate 99, asparagine 101, aspartate 103, lysine 105, glutamate 110, aspartate 135, aspartate 137, threonine 139, threonine 141, and glutamate 146 each contribute to the Ca(2+) site. The tract at residues 159–168 (IEEIIRFWKH) is linker region. The segment at 174 to 475 (IGDSLTIPDE…MKQTLGVTQK (302 aa)) is C-terminal transmembrane transporter domain. Solcar repeat units follow at residues 192-276 (GQWW…YKKL), 284-369 (IGTF…LKSH), and 381-469 (PGVL…MKQT). The helical transmembrane segment at 198–215 (LLAGGIAGAVSRTSTAPL) threads the bilayer. Residues 216–250 (DRLKVMMQVHGSKSMNIFGGFRQMIKEGGVRSLWR) lie on the Mitochondrial matrix side of the membrane. Residues 251 to 270 (GNGTNVIKIAPETAVKFWVY) traverse the membrane as a helical segment. Over 271–293 (EQYKKLLTEEGQKIGTFERFISG) the chain is Mitochondrial intermembrane. The chain crosses the membrane as a helical span at residues 294-307 (SMAGATAQTFIYPM). Topologically, residues 308–343 (EVMKTRLAVGKTGQYSGIYDCAKKILKYEGFGAFYK) are mitochondrial matrix. N6-acetyllysine; alternate is present on lysine 318. Residue lysine 318 is modified to N6-succinyllysine; alternate. At lysine 334 the chain carries N6-acetyllysine. The chain crosses the membrane as a helical span at residues 344–363 (GYVPNLLGIIPYAGIDLAVY). The Mitochondrial intermembrane segment spans residues 364 to 386 (ELLKSHWLDNFAKDSVNPGVLVL). A helical membrane pass occupies residues 387 to 404 (LGCGALSSTCGQLASYPL). The Mitochondrial matrix segment spans residues 405-443 (ALVRTRMQAQAMLEGAPQLNMVGLFRRIISKEGLPGLYR). Lysine 435 carries the N6-acetyllysine; alternate modification. Lysine 435 carries the post-translational modification N6-succinyllysine; alternate. The helical transmembrane segment at 444 to 463 (GITPNFMKVLPAVGISYVVY) threads the bilayer. The Mitochondrial intermembrane portion of the chain corresponds to 464–475 (ENMKQTLGVTQK).

Belongs to the mitochondrial carrier (TC 2.A.29) family. In terms of assembly, monomer. In terms of tissue distribution, mainly expressed in colon. Also expressed in the small intestine proximal to the ileum. Weakly expressed in kidney but not in the liver.

It is found in the mitochondrion inner membrane. The protein localises to the peroxisome membrane. The catalysed reaction is Mg(2+)(out) + phosphate(in) + ATP(out) = Mg(2+)(in) + phosphate(out) + ATP(in). It carries out the reaction ADP(out) + phosphate(in) + H(+)(out) = ADP(in) + phosphate(out) + H(+)(in). The enzyme catalyses AMP(out) + phosphate(in) = AMP(in) + phosphate(out). It catalyses the reaction phosphate(in) + ATP(out) + 2 H(+)(out) = phosphate(out) + ATP(in) + 2 H(+)(in). The catalysed reaction is dADP(in) + ADP(out) = dADP(out) + ADP(in). It carries out the reaction Mg(2+)(in) + ADP(out) + ATP(in) + H(+)(out) = Mg(2+)(out) + ADP(in) + ATP(out) + H(+)(in). The enzyme catalyses ADP(out) + diphosphate(in) = ADP(in) + diphosphate(out). It catalyses the reaction dAMP(in) + ADP(out) + H(+)(out) = dAMP(out) + ADP(in) + H(+)(in). The catalysed reaction is 3'-AMP(in) + ADP(out) + H(+)(out) = 3'-AMP(out) + ADP(in) + H(+)(in). It carries out the reaction dAMP(out) + phosphate(in) = dAMP(in) + phosphate(out). The enzyme catalyses 3'-AMP(out) + phosphate(in) = 3'-AMP(in) + phosphate(out). It catalyses the reaction dADP(out) + phosphate(in) + H(+)(out) = dADP(in) + phosphate(out) + H(+)(in). Activated by an increase in cytosolic calcium levels that induce a conformational change of the N-terminal regulatory domain, uncapping the channel and allowing transport. Inhibited by bathophenanthroline, mersalyl, p-hydroxymercuribenzoate, bromcresol purple and tannic acid. Functionally, electroneutral antiporter that mediates the transport of adenyl nucleotides through the inner mitochondrial membrane. Originally identified as an ATP-magnesium/inorganic phosphate antiporter, it also acts as a broad specificity adenyl nucleotide antiporter. By regulating the mitochondrial matrix adenyl nucleotide pool could adapt to changing cellular energetic demands and indirectly regulate adenyl nucleotide-dependent metabolic pathways. In vitro, a low activity is also observed with guanyl and pyrimidine nucleotides. May play a role in protecting cells against oxidative stress-induced cell death, by buffering calcium levels in the mitochondrial matrix through the formation of calcium-phosphate precipitates. This chain is Mitochondrial adenyl nucleotide antiporter SLC25A24 (SLC25A24), found in Oryctolagus cuniculus (Rabbit).